Reading from the N-terminus, the 160-residue chain is XSQLTKDEIEEVREVFDLFDFWDGRDGDVDAAKVGDLLRCLGMNPTEAQVHQHGGTKKMGEKAYKLEEILPIYEEMSSKDTGTAADEFMEAFKTFDREGQGLISSAEIRNVLKMLGERITEDQCNDIFTFCDIREDIDGNIKYEDLMKKVMAGPFPDKSD.

Xaa-1 carries the post-translational modification Blocked amino end (Xaa). EF-hand domains follow at residues 7–44 (DEIE…LGMN), 83–118 (TAAD…LGER), and 119–153 (ITED…VMAG).

In terms of biological role, in molluscan muscle, calcium regulation is associated with myosin rather than with actin. Muscle myosin contains two types of light chains: the catalytic light chain, essential for ATPase activity, and the regulatory light chain, a calcium-binding protein responsible for Ca(2+) dependent binding and Ca(2+) dependent Mg-ATPase activity. In Todarodes pacificus (Japanese flying squid), this protein is Myosin catalytic light chain LC-1, mantle muscle.